The primary structure comprises 481 residues: Methylenetetrahydrofolate--tRNA-(uracil-5-)-methyltransferase TrmFO (481 aa).

An FAD-binding site is contributed by 13–18 (GGGLAG).

The protein belongs to the MnmG family. TrmFO subfamily. FAD serves as cofactor.

Its subcellular location is the cytoplasm. It carries out the reaction uridine(54) in tRNA + (6R)-5,10-methylene-5,6,7,8-tetrahydrofolate + NADH + H(+) = 5-methyluridine(54) in tRNA + (6S)-5,6,7,8-tetrahydrofolate + NAD(+). The catalysed reaction is uridine(54) in tRNA + (6R)-5,10-methylene-5,6,7,8-tetrahydrofolate + NADPH + H(+) = 5-methyluridine(54) in tRNA + (6S)-5,6,7,8-tetrahydrofolate + NADP(+). In terms of biological role, catalyzes the folate-dependent formation of 5-methyl-uridine at position 54 (M-5-U54) in all tRNAs. This chain is Methylenetetrahydrofolate--tRNA-(uracil-5-)-methyltransferase TrmFO, found in Agrobacterium fabrum (strain C58 / ATCC 33970) (Agrobacterium tumefaciens (strain C58)).